We begin with the raw amino-acid sequence, 309 residues long: Porphobilinogen deaminase (309 aa).

Position 242 is an S-(dipyrrolylmethanemethyl)cysteine (cysteine 242).

Belongs to the HMBS family. As to quaternary structure, monomer. Dipyrromethane is required as a cofactor.

It carries out the reaction 4 porphobilinogen + H2O = hydroxymethylbilane + 4 NH4(+). Its pathway is porphyrin-containing compound metabolism; protoporphyrin-IX biosynthesis; coproporphyrinogen-III from 5-aminolevulinate: step 2/4. Functionally, tetrapolymerization of the monopyrrole PBG into the hydroxymethylbilane pre-uroporphyrinogen in several discrete steps. The polypeptide is Porphobilinogen deaminase (Shewanella sediminis (strain HAW-EB3)).